Reading from the N-terminus, the 574-residue chain is Cyclomaltodextrinase (574 aa).

Ca(2+)-binding residues include Asn144, Asp146, Asn149, Asp150, Gly168, and Asp170. Substrate is bound by residues His243 and Arg323. The active-site Nucleophile is the Asp325. The Proton donor role is filled by Glu354. Residues 420 to 421, Asp465, and Arg469 contribute to the substrate site; that span reads HD.

This sequence belongs to the glycosyl hydrolase 13 family. Monomer. The cofactor is Ca(2+).

The enzyme catalyses cyclomaltodextrin + H2O = linear maltodextrin. In terms of biological role, hydrolyzes cyclodextrins. Can also act on linear maltodextrins, with the exception of maltose. In Thermoanaerobacter pseudethanolicus (strain ATCC 33223 / 39E) (Clostridium thermohydrosulfuricum), this protein is Cyclomaltodextrinase.